The chain runs to 354 residues: 4-hydroxy-2-oxovalerate aldolase 6 (354 aa).

One can recognise a Pyruvate carboxyltransferase domain in the interval 10 to 262 (VRIVDTTLRD…ATGLDVMATL (253 aa)). Position 18–19 (18–19 (RD)) interacts with substrate. Residue aspartate 19 coordinates Mn(2+). The active-site Proton acceptor is histidine 22. Substrate-binding residues include serine 172 and histidine 201. Mn(2+)-binding residues include histidine 201 and histidine 203. Tyrosine 292 contacts substrate.

Belongs to the 4-hydroxy-2-oxovalerate aldolase family.

The enzyme catalyses (S)-4-hydroxy-2-oxopentanoate = acetaldehyde + pyruvate. This chain is 4-hydroxy-2-oxovalerate aldolase 6, found in Rhodococcus jostii (strain RHA1).